Reading from the N-terminus, the 635-residue chain is Threonine--tRNA ligase (635 aa).

Residues 1–61 (MTVVRLPDGT…EIDSDLVLIT (61 aa)) enclose the TGS domain. The interval 242–533 (DHRKLGKQLD…LIEHHAGALP (292 aa)) is catalytic. Cys-333, His-384, and His-510 together coordinate Zn(2+).

It belongs to the class-II aminoacyl-tRNA synthetase family. Homodimer. The cofactor is Zn(2+).

The protein resides in the cytoplasm. The catalysed reaction is tRNA(Thr) + L-threonine + ATP = L-threonyl-tRNA(Thr) + AMP + diphosphate + H(+). Functionally, catalyzes the attachment of threonine to tRNA(Thr) in a two-step reaction: L-threonine is first activated by ATP to form Thr-AMP and then transferred to the acceptor end of tRNA(Thr). Also edits incorrectly charged L-seryl-tRNA(Thr). The sequence is that of Threonine--tRNA ligase from Nitrosomonas eutropha (strain DSM 101675 / C91 / Nm57).